The chain runs to 937 residues: Bifunctional glutamine synthetase adenylyltransferase/adenylyl-removing enzyme (937 aa).

The interval 1 to 436 (MSQPIPSASP…AAEFAELLAP (436 aa)) is adenylyl removase. The segment at 443–937 (PDTLADYWRA…QLRFQPGKGA (495 aa)) is adenylyl transferase.

This sequence belongs to the GlnE family. Mg(2+) serves as cofactor.

The catalysed reaction is [glutamine synthetase]-O(4)-(5'-adenylyl)-L-tyrosine + phosphate = [glutamine synthetase]-L-tyrosine + ADP. It catalyses the reaction [glutamine synthetase]-L-tyrosine + ATP = [glutamine synthetase]-O(4)-(5'-adenylyl)-L-tyrosine + diphosphate. Involved in the regulation of glutamine synthetase GlnA, a key enzyme in the process to assimilate ammonia. When cellular nitrogen levels are high, the C-terminal adenylyl transferase (AT) inactivates GlnA by covalent transfer of an adenylyl group from ATP to specific tyrosine residue of GlnA, thus reducing its activity. Conversely, when nitrogen levels are low, the N-terminal adenylyl removase (AR) activates GlnA by removing the adenylyl group by phosphorolysis, increasing its activity. The regulatory region of GlnE binds the signal transduction protein PII (GlnB) which indicates the nitrogen status of the cell. In Xanthomonas campestris pv. campestris (strain B100), this protein is Bifunctional glutamine synthetase adenylyltransferase/adenylyl-removing enzyme.